Here is a 454-residue protein sequence, read N- to C-terminus: uncharacterized protein (454 aa).

The first 21 residues, 1–21, serve as a signal peptide directing secretion; sequence MKYKTVKSIPLFLLGSIVFTA. C22 is lipidated: N-palmitoyl cysteine. Residue C22 is the site of S-diacylglycerol cysteine attachment. Positions 55-64 are enriched in low complexity; sequence ASSSSSTTTS. Positions 55-87 are disordered; that stretch reads ASSSSSTTTSNDDNNQKGYFLETNRSTGTYDPN. Polar residues predominate over residues 65–87; the sequence is NDDNNQKGYFLETNRSTGTYDPN.

The protein localises to the cell membrane. This is an uncharacterized protein from Mycoplasma pneumoniae (strain ATCC 29342 / M129 / Subtype 1) (Mycoplasmoides pneumoniae).